Reading from the N-terminus, the 346-residue chain is High mobility group protein 20A (346 aa).

2 stretches are compositionally biased toward polar residues: residues 1-10 (MESLMASSTL) and 55-65 (SQGQLLQSEAS). Disordered stretches follow at residues 1 to 112 (MESL…YVRF) and 178 to 210 (FSRKTQDRQKGKSHRQDAARQATHDHEKETEVK). Residues 71-81 (NEQRPEDEQRS) show a composition bias toward basic and acidic residues. Basic residues predominate over residues 82 to 95 (KRGGWSKGRKRKKP). A DNA-binding region (HMG box) is located at residues 102 to 170 (PKSPLTGYVR…RYMKELEQYQ (69 aa)). Ser-104 carries the post-translational modification Phosphoserine. Positions 181 to 210 (KTQDRQKGKSHRQDAARQATHDHEKETEVK) are enriched in basic and acidic residues. Residues 228–272 (SKAREAELRQLRKSNMEFEERNAALQKHVESMRTAVEKLEVDVIQ) adopt a coiled-coil conformation.

Interacts with DTNB. In terms of tissue distribution, expressed in brain. Detected in mature neurons.

It localises to the nucleus. Its function is as follows. Plays a role in neuronal differentiation as chromatin-associated protein. Acts as inhibitor of HMG20B. Overcomes the repressive effects of the neuronal silencer REST and induces the activation of neuronal-specific genes. Involved in the recruitment of the histone methyltransferase KMT2A/MLL1 and consequent increased methylation of histone H3 lysine 4. This Mus musculus (Mouse) protein is High mobility group protein 20A (Hmg20a).